We begin with the raw amino-acid sequence, 433 residues long: Delta-aminolevulinic acid dehydratase, chloroplastic (433 aa).

The transit peptide at 1 to 56 (MASTFNIPCNAGTIKNFNNSQRNLGFSSNLGINFAKTRFSNCGDSGRIPSQLVVRA) directs the protein to the chloroplast. Residues 83 to 115 (NAPSAPPVPPTPKAPSGTPSVSPLSLGRRPRRN) form a disordered region. Residues 86 to 95 (SAPPVPPTPK) show a composition bias toward pro residues. Lys-301 (schiff-base intermediate with substrate) is an active-site residue. Residues Arg-311 and Lys-323 each coordinate 5-aminolevulinate. Residue Glu-339 coordinates Mg(2+). The Schiff-base intermediate with substrate role is filled by Lys-354. 5-aminolevulinate contacts are provided by Ser-380 and Tyr-419.

The protein belongs to the ALAD family. Homooctamer. Requires Mg(2+) as cofactor.

The protein resides in the plastid. The protein localises to the chloroplast. It carries out the reaction 2 5-aminolevulinate = porphobilinogen + 2 H2O + H(+). The protein operates within porphyrin-containing compound metabolism; protoporphyrin-IX biosynthesis; coproporphyrinogen-III from 5-aminolevulinate: step 1/4. Catalyzes an early step in the biosynthesis of tetrapyrroles. Binds two molecules of 5-aminolevulinate per subunit, each at a distinct site, and catalyzes their condensation to form porphobilinogen. The sequence is that of Delta-aminolevulinic acid dehydratase, chloroplastic (HEMB) from Spinacia oleracea (Spinach).